A 798-amino-acid chain; its full sequence is MAHKGKAAPAKPPTSHKKEVKSLKRKRGQEELSTLRKAIDEFDLKSTPKAFAELPLSEPTAKGVRDSHFETLTDIQARAIPLALKGRDILGAAKTGSGKTLAFLVPLLEKLYREQWTQEAKLGALVLSPTRELAVQTFQVLRKIGRHHLFSAGLVIGGKSVREEAEALSRMNILIGTPGRILQHLDQTHGFDVDNLQLLVLDEADRIMDLGFQRDVDALVQHLPTTRQTLLFSATQSKKVSDLARLSLKDPEYVSVHAEATTATPSTLQQHYIVTPLPEKLDTLWGFIKANLKSKMVVFLSSGKQVRFVYESFRQMQPGIPLLHMHGRQKQLARLDVTKRFDSSKHACLFATDVIARGIDFTGVDWVVQVDAPEDTDDYIHRVGRTARYEREGKAVIFLDPSEEAGMLKRLERKKVPITKVTAKDSKKKSIRDELQSICWKSHDVKYLAQKAFISYARAVHRATERDEKHNENSDQVFKFDKLDLEGFAKSMGLAGAPQIKFQKGEDVKRMKNAPRAPLSSGSEDESGDDKPRRRKKDEVRTKADKMFERTNQDVLSKHYRNLVEDGENDEEEDFFTTKRVLRGDELDEAAGGAGAGLPTAKTIDLGGTELVLDSKRREKLIKSKKQLAKLKGKGQKLVFDDDGVAHPLYTLQDEDDFKQQGPAEALRKQFVEQEGDKVKEADIDDKALAKQKKREKKLKRKARERGEAEGNGGPQLAGGDDDDEDPLEMLRSLPMAGTTRDSGDDESEDERPKKKPKKWFQDDSDDERKPKSKVIELDHEPDTLEDYEAIAAGLLDD.

The segment at 1-30 (MAHKGKAAPAKPPTSHKKEVKSLKRKRGQE) is disordered. Positions 16–30 (HKKEVKSLKRKRGQE) are enriched in basic and acidic residues. The Q motif motif lies at 49-77 (KAFAELPLSEPTAKGVRDSHFETLTDIQA). Residues 80–254 (IPLALKGRDI…RLSLKDPEYV (175 aa)) form the Helicase ATP-binding domain. An ATP-binding site is contributed by 93-100 (AKTGSGKT). The DEAD box signature appears at 202 to 205 (DEAD). The Helicase C-terminal domain occupies 280-435 (KLDTLWGFIK…SKKKSIRDEL (156 aa)). 2 disordered regions span residues 503 to 544 (QKGE…RTKA) and 653 to 781 (QDED…LDHE). Composition is skewed to basic and acidic residues over residues 529-544 (DDKP…RTKA) and 666-689 (ALRK…DKAL). Residues 690–704 (AKQKKREKKLKRKAR) show a composition bias toward basic residues. Residues 767–781 (DERKPKSKVIELDHE) are compositionally biased toward basic and acidic residues.

This sequence belongs to the DEAD box helicase family. DDX10/DBP4 subfamily. Interacts with the U3 and U14 snoRNAs. Associates with pre-ribosomal complexes.

The protein localises to the nucleus. The protein resides in the nucleolus. It carries out the reaction ATP + H2O = ADP + phosphate + H(+). ATP-dependent RNA helicase required for ribosome biogenesis. Involved in the release of U14 snoRNA in pre-ribosomal complexes. Required for pre-rRNA cleavage at site A2. The sequence is that of ATP-dependent RNA helicase DBP4 (DBP4) from Pyricularia oryzae (strain 70-15 / ATCC MYA-4617 / FGSC 8958) (Rice blast fungus).